Here is a 231-residue protein sequence, read N- to C-terminus: MNPPKAILTDIEGTTTPIAFVHRVLFPYAKANMAGFLAAYSDDEAVAAILAEVEAQYPGRPALETLLGWMDEDAKITPLKALQGLIWREGYRNGALQAQVHPDAAQSLRAWHEAGLNLFVYSSGSVEAQQLLFSYSDQGDLSLLFGGFFDTRIGGKREADSYRHIIANTGMQPQSMLFLSDIEEELDAALDAGLRTCQLVRAGDNGGPPTLRHPHAPDFIAVAHLFGLPHP.

This sequence belongs to the HAD-like hydrolase superfamily. MasA/MtnC family. In terms of assembly, monomer. It depends on Mg(2+) as a cofactor.

The catalysed reaction is 5-methylsulfanyl-2,3-dioxopentyl phosphate + H2O = 1,2-dihydroxy-5-(methylsulfanyl)pent-1-en-3-one + phosphate. Its pathway is amino-acid biosynthesis; L-methionine biosynthesis via salvage pathway; L-methionine from S-methyl-5-thio-alpha-D-ribose 1-phosphate: step 3/6. The protein operates within amino-acid biosynthesis; L-methionine biosynthesis via salvage pathway; L-methionine from S-methyl-5-thio-alpha-D-ribose 1-phosphate: step 4/6. Bifunctional enzyme that catalyzes the enolization of 2,3-diketo-5-methylthiopentyl-1-phosphate (DK-MTP-1-P) into the intermediate 2-hydroxy-3-keto-5-methylthiopentenyl-1-phosphate (HK-MTPenyl-1-P), which is then dephosphorylated to form the acireductone 1,2-dihydroxy-3-keto-5-methylthiopentene (DHK-MTPene). The protein is Enolase-phosphatase E1 of Granulibacter bethesdensis (strain ATCC BAA-1260 / CGDNIH1).